The sequence spans 1342 residues: DNA-directed RNA polymerase subunit beta (1342 aa).

The protein belongs to the RNA polymerase beta chain family. The RNAP catalytic core consists of 2 alpha, 1 beta, 1 beta' and 1 omega subunit. When a sigma factor is associated with the core the holoenzyme is formed, which can initiate transcription.

The enzyme catalyses RNA(n) + a ribonucleoside 5'-triphosphate = RNA(n+1) + diphosphate. DNA-dependent RNA polymerase catalyzes the transcription of DNA into RNA using the four ribonucleoside triphosphates as substrates. The chain is DNA-directed RNA polymerase subunit beta from Aeromonas hydrophila subsp. hydrophila (strain ATCC 7966 / DSM 30187 / BCRC 13018 / CCUG 14551 / JCM 1027 / KCTC 2358 / NCIMB 9240 / NCTC 8049).